The following is a 408-amino-acid chain: Arginine biosynthesis bifunctional protein ArgJ (408 aa).

Thr158, Lys184, Thr195, Glu281, Asn403, and Thr408 together coordinate substrate. The active-site Nucleophile is Thr195.

Belongs to the ArgJ family. Heterotetramer of two alpha and two beta chains.

Its subcellular location is the cytoplasm. The enzyme catalyses N(2)-acetyl-L-ornithine + L-glutamate = N-acetyl-L-glutamate + L-ornithine. It carries out the reaction L-glutamate + acetyl-CoA = N-acetyl-L-glutamate + CoA + H(+). Its pathway is amino-acid biosynthesis; L-arginine biosynthesis; L-ornithine and N-acetyl-L-glutamate from L-glutamate and N(2)-acetyl-L-ornithine (cyclic): step 1/1. The protein operates within amino-acid biosynthesis; L-arginine biosynthesis; N(2)-acetyl-L-ornithine from L-glutamate: step 1/4. Its function is as follows. Catalyzes two activities which are involved in the cyclic version of arginine biosynthesis: the synthesis of N-acetylglutamate from glutamate and acetyl-CoA as the acetyl donor, and of ornithine by transacetylation between N(2)-acetylornithine and glutamate. The chain is Arginine biosynthesis bifunctional protein ArgJ from Bacillus cereus (strain ZK / E33L).